We begin with the raw amino-acid sequence, 222 residues long: MVRGERMLCPAWLLALAVLCAAGSEVRAQCMEDARCRDLTTDENILDCIQLCRSDLTDETPVYPGESHLQPPSELEQTEVLVPLSPAALAPAEQMDPESSPQHEHKRSYSMEHFRWGKPVGRKRRPIKVYTNGVEEESTETLPAEMRRELATNEIDYPQEEGALNQQDKKDGSYKMSHFRWSSPPASKRYGGFMKSWDERSQKPLLTLFKNVINKEHQKKDQ.

Positions 1-28 (MVRGERMLCPAWLLALAVLCAAGSEVRA) are cleaved as a signal peptide. A propeptide spanning residues 29-105 (QCMEDARCRD…DPESSPQHEH (77 aa)) is cleaved from the precursor.

Belongs to the POMC family. Specific enzymatic cleavages at paired basic residues yield the different active peptides.

It is found in the secreted. Functionally, stimulates the adrenal glands to release cortisol. Its function is as follows. Anorexigenic peptide. Increases the pigmentation of skin by increasing melanin production in melanocytes. Increases the pigmentation of skin by increasing melanin production in melanocytes. In terms of biological role, endogenous orexigenic opiate. Functionally, endogenous opiate. This Cyprinus carpio (Common carp) protein is Pro-opiomelanocortin-1 (pomca).